We begin with the raw amino-acid sequence, 563 residues long: Alpha-keto-acid decarboxylase (563 aa).

Position 59 (Glu59) interacts with thiamine diphosphate. The tract at residues 348 to 367 (SPPVASPPAEPLPPPPPREQ) is disordered. The segment covering 351 to 366 (VASPPAEPLPPPPPRE) has biased composition (pro residues). Residues 394 to 476 (TSFYGMADHR…VVVNNDGYTV (83 aa)) are thiamine pyrophosphate binding. Mg(2+)-binding residues include Asp444, Asn471, and Gly473.

Belongs to the TPP enzyme family. The cofactor is a metal cation. Requires thiamine diphosphate as cofactor.

Decarboxylates branched-chain and aromatic alpha-keto acids to aldehydes. The sequence is that of Alpha-keto-acid decarboxylase (kdc) from Mycobacterium avium (strain 104).